The following is a 139-amino-acid chain: Transcription antitermination protein NusB (139 aa).

This sequence belongs to the NusB family.

In terms of biological role, involved in transcription antitermination. Required for transcription of ribosomal RNA (rRNA) genes. Binds specifically to the boxA antiterminator sequence of the ribosomal RNA (rrn) operons. The chain is Transcription antitermination protein NusB from Idiomarina loihiensis (strain ATCC BAA-735 / DSM 15497 / L2-TR).